The sequence spans 992 residues: UPF0182 protein BCG_3215c (992 aa).

7 helical membrane passes run 18–38 (ILIM…RLID), 63–83 (IVVC…GLAL), 113–133 (LVGI…AQSY), 175–195 (LVSV…FGGI), 210–230 (VQLV…YWLD), 259–279 (KLIL…AIAL), and 287–307 (IGLV…PLIV). The disordered stretch occupies residues 906–938 (PTEAAVPPSPAANPPPPASGPQPPPVTAAPPVP). Pro residues predominate over residues 912 to 938 (PPSPAANPPPPASGPQPPPVTAAPPVP).

The protein belongs to the UPF0182 family.

Its subcellular location is the cell membrane. This is UPF0182 protein BCG_3215c from Mycobacterium bovis (strain BCG / Pasteur 1173P2).